The primary structure comprises 366 residues: Short-chain collagen C4 (366 aa).

A compositionally biased stretch (low complexity) spans 1-14 (DTGPQGPQGVAGPP). Triple-helical region regions lie at residues 1–23 (DTGPQGPQGVAGPPGIDGAKGDK) and 40–210 (GPPG…NGAV). The disordered stretch occupies residues 1–207 (DTGPQGPQGV…QGPQGAPGSN (207 aa)). Over residues 28–45 (YPPPPTCPTCPAGPPGAP) the composition is skewed to pro residues. Low complexity-rich tracts occupy residues 75–90 (PGNDGQPGAPGAPGYD) and 99–110 (TGAPGPQGPKGD). Residues 138 to 149 (DGQDGAKGDKGD) show a composition bias toward basic and acidic residues. 2 stretches are compositionally biased toward low complexity: residues 150–168 (QGPAGTPGAPGKDGAQGPA) and 189–201 (QGPKGDVGPQGPQ).

It is found in the secreted. The protein resides in the extracellular space. It localises to the extracellular matrix. The protein is Short-chain collagen C4 of Ephydatia muelleri (Mueller's freshwater sponge).